Here is a 120-residue protein sequence, read N- to C-terminus: NAD(P)H-quinone oxidoreductase subunit 3, organellar chromatophore (120 aa).

Transmembrane regions (helical) follow at residues 6–26, 64–84, and 89–109; these read GYDAFLGFLLIATAVPVLALL, MFALVFVIFDVETVFLYPWAV, and LGLLAFIEALIFIAILVIALA.

The protein belongs to the complex I subunit 3 family. In terms of assembly, NDH is composed of at least 16 different subunits, 5 of which are encoded in the nucleus.

The protein localises to the plastid. Its subcellular location is the organellar chromatophore thylakoid membrane. The enzyme catalyses a plastoquinone + NADH + (n+1) H(+)(in) = a plastoquinol + NAD(+) + n H(+)(out). It catalyses the reaction a plastoquinone + NADPH + (n+1) H(+)(in) = a plastoquinol + NADP(+) + n H(+)(out). In terms of biological role, NDH shuttles electrons from NAD(P)H:plastoquinone, via FMN and iron-sulfur (Fe-S) centers, to quinones in the photosynthetic chain and possibly in a chloroplast respiratory chain. The immediate electron acceptor for the enzyme in this species is believed to be plastoquinone. Couples the redox reaction to proton translocation, and thus conserves the redox energy in a proton gradient. The polypeptide is NAD(P)H-quinone oxidoreductase subunit 3, organellar chromatophore (Paulinella chromatophora).